The primary structure comprises 183 residues: TATA-box-binding protein (183 aa).

2 consecutive repeat copies span residues 8 to 84 and 99 to 175.

It belongs to the TBP family.

In terms of biological role, general factor that plays a role in the activation of archaeal genes transcribed by RNA polymerase. Binds specifically to the TATA box promoter element which lies close to the position of transcription initiation. The sequence is that of TATA-box-binding protein from Methanosphaera stadtmanae (strain ATCC 43021 / DSM 3091 / JCM 11832 / MCB-3).